The following is a 66-amino-acid chain: Large ribosomal subunit protein bL35 (66 aa).

The span at 1-16 shows a compositional bias: basic residues; sequence MPKQKTHRASAKRFKR. A disordered region spans residues 1–22; the sequence is MPKQKTHRASAKRFKRTGSGGL.

Belongs to the bacterial ribosomal protein bL35 family.

This is Large ribosomal subunit protein bL35 from Streptococcus suis (strain 05ZYH33).